The primary structure comprises 245 residues: Membrane-spanning 4-domains subfamily A member 15 (245 aa).

The tract at residues 1-30 is disordered; that stretch reads MWERRGRGESAAGTAAVASRNASGLRPPPA. 4 helical membrane-spanning segments follow: residues 78-98, 103-123, 147-167, and 176-196; these read GTVQILIGLIHLGFGSVLLMV, LGMLFIEGGVPFWGGACFIIS, ILSAMAAFAGTAILLMDFGVT, and LAVLTIFTILEFFIAVIATHF.

Belongs to the MS4A family.

The protein localises to the membrane. Functionally, may be involved in signal transduction as a component of a multimeric receptor complex. In Mus musculus (Mouse), this protein is Membrane-spanning 4-domains subfamily A member 15 (Ms4a15).